The primary structure comprises 142 residues: Transcriptional regulator MraZ (142 aa).

2 SpoVT-AbrB domains span residues 5 to 51 and 77 to 120; these read ASAL…PRPE and AADV…DAAT.

The protein belongs to the MraZ family. Forms oligomers.

It localises to the cytoplasm. The protein localises to the nucleoid. The protein is Transcriptional regulator MraZ of Cupriavidus taiwanensis (strain DSM 17343 / BCRC 17206 / CCUG 44338 / CIP 107171 / LMG 19424 / R1) (Ralstonia taiwanensis (strain LMG 19424)).